Here is a 339-residue protein sequence, read N- to C-terminus: Glyceraldehyde-3-phosphate dehydrogenase (339 aa).

NAD(+)-binding positions include 12 to 13, aspartate 39, arginine 84, and serine 127; that span reads RI. Residues 157 to 159, threonine 188, arginine 203, 216 to 217, and arginine 239 contribute to the D-glyceraldehyde 3-phosphate site; these read SCT and TG. Residue cysteine 158 is the Nucleophile of the active site. Position 320 (asparagine 320) interacts with NAD(+).

This sequence belongs to the glyceraldehyde-3-phosphate dehydrogenase family. Homotetramer.

The protein localises to the cytoplasm. The enzyme catalyses D-glyceraldehyde 3-phosphate + phosphate + NAD(+) = (2R)-3-phospho-glyceroyl phosphate + NADH + H(+). It functions in the pathway carbohydrate degradation; glycolysis; pyruvate from D-glyceraldehyde 3-phosphate: step 1/5. In terms of biological role, catalyzes the oxidative phosphorylation of glyceraldehyde 3-phosphate (G3P) to 1,3-bisphosphoglycerate (BPG) using the cofactor NAD. The first reaction step involves the formation of a hemiacetal intermediate between G3P and a cysteine residue, and this hemiacetal intermediate is then oxidized to a thioester, with concomitant reduction of NAD to NADH. The reduced NADH is then exchanged with the second NAD, and the thioester is attacked by a nucleophilic inorganic phosphate to produce BPG. The polypeptide is Glyceraldehyde-3-phosphate dehydrogenase (gap) (Mycobacterium bovis (strain ATCC BAA-935 / AF2122/97)).